The following is a 794-amino-acid chain: Phosphoenolpyruvate synthase (794 aa).

H422 serves as the catalytic Tele-phosphohistidine intermediate. 7 residues coordinate substrate: R512, R579, E681, G702, S703, N704, and D705. A Mg(2+)-binding site is contributed by E681. A Mg(2+)-binding site is contributed by D705. C752 acts as the Proton donor in catalysis.

The protein belongs to the PEP-utilizing enzyme family. Requires Mg(2+) as cofactor.

The catalysed reaction is pyruvate + ATP + H2O = phosphoenolpyruvate + AMP + phosphate + 2 H(+). The protein operates within carbohydrate biosynthesis; gluconeogenesis. Catalyzes the phosphorylation of pyruvate to phosphoenolpyruvate. This chain is Phosphoenolpyruvate synthase (ppsA), found in Neisseria meningitidis serogroup B (strain ATCC BAA-335 / MC58).